We begin with the raw amino-acid sequence, 854 residues long: Cell division control protein 24 (854 aa).

The segment covering 1-14 (MAIQTRFASGTSLS) has biased composition (polar residues). The tract at residues 1–24 (MAIQTRFASGTSLSDLKPKPSATS) is disordered. A Calponin-homology (CH) domain is found at 135 to 246 (PNMEDTLLTF…VVETLMNSSP (112 aa)). One can recognise a DH domain in the interval 278 to 454 (EYVKIIKEFV…KNIARSINEN (177 aa)). The 191-residue stretch at 478–668 (RISKFGELLY…WSSCLQQLIH (191 aa)) folds into the PH domain. Disordered stretches follow at residues 542-571 (ISAS…SNNI) and 674-745 (QFKA…FESE). Low complexity predominate over residues 682–707 (STSTTSSTAKSSSMMSPTTTMNTPNH). One can recognise a PB1 domain in the interval 761-854 (SILFRISYNN…NEKFLNIRLY (94 aa)).

As to quaternary structure, interacts with AXL2.

Promotes the exchange of CDC42-bound GDP by GTP. Controls the polarity of calmodulin, and the calcium regulatory process of bud emergence. CDC24 may be involved in the initial selection and organization of the budding site. This Saccharomyces cerevisiae (strain ATCC 204508 / S288c) (Baker's yeast) protein is Cell division control protein 24 (CDC24).